Reading from the N-terminus, the 931-residue chain is Adhesion G protein-coupled receptor E1 (931 aa).

An N-terminal signal peptide occupies residues 1–27 (MWGFWLLLFWGFSGMYRWGMTTLPTLG). Over 28-644 (QTLGGVNECQ…IMASGELTME (617 aa)) the chain is Extracellular. 2 EGF-like domains span residues 32–80 (GVNE…VECQ) and 81–132 (DVNE…FLCA). 21 cysteine pairs are disulfide-bonded: Cys36–Cys48, Cys42–Cys57, Cys59–Cys79, Cys85–Cys98, Cys92–Cys107, Cys109–Cys131, Cys137–Cys149, Cys143–Cys158, Cys160–Cys171, Cys177–Cys189, Cys183–Cys198, Cys200–Cys220, Cys226–Cys239, Cys233–Cys248, Cys250–Cys270, Cys276–Cys286, Cys280–Cys295, Cys297–Cys317, Cys323–Cys336, Cys330–Cys345, and Cys347–Cys366. Residues 133–172 (DVDECLTIGICPKYSNCSNSVGSYSCTCQPGFVLNGSICE) enclose the EGF-like 3; calcium-binding domain. 2 N-linked (GlcNAc...) asparagine glycosylation sites follow: Asn148 and Asn167. The 49-residue stretch at 173–221 (DEDECVTRDVCPEHATCHNTLGSYYCTCNSGLESSGGGPMFQGLDESCE) folds into the EGF-like 4; calcium-binding domain. An EGF-like 5; calcium-binding domain is found at 222–271 (DVDECSRNSTLCGPTFICINTLGSYSCSCPAGFSLPTFQILGHPADGNCT). Asn229 carries N-linked (GlcNAc...) asparagine glycosylation. Asn269 and Asn283 each carry an N-linked (GlcNAc...) asparagine glycan. An EGF-like 6; calcium-binding domain is found at 272–318 (DIDECDDTCPLNSSCTNTIGSYFCTCHPGFASSNGQLNFKDLEVTCE). The region spanning 319–367 (DIDECTQDPLQCGLNSVCTNVPGSYICGCLPDFQMDPEGSQGYGNFNCK) is the EGF-like 7; calcium-binding domain. 4 N-linked (GlcNAc...) asparagine glycosylation sites follow: Asn405, Asn417, Asn474, and Asn498. In terms of domain architecture, GAIN-B spans 482-642 (EYLDIESKVI…AIIMASGELT (161 aa)). The Cell attachment site motif lies at 506–508 (RGD). 2 disulfide bridges follow: Cys595/Cys624 and Cys612/Cys626. Positions 595–642 (CVSWNTDVEDGRWTPSGCEIVEASETHTVCSCNRMANLAIIMASGELT) are GPS. The helical transmembrane segment at 645-672 (FSLYIISHVGTVISLVCLALAIATFLLC) threads the bilayer. At 673-679 (RAVQNHN) the chain is on the cytoplasmic side. The helical transmembrane segment at 680 to 701 (TYMHLHLCVCLFLAKILFLTGI) threads the bilayer. Topologically, residues 702–711 (DKTDNQTACA) are extracellular. Asn706 carries N-linked (GlcNAc...) asparagine glycosylation. A helical transmembrane segment spans residues 712–735 (IIAGFLHYLFLACFFWMLVEAVML). The Cytoplasmic segment spans residues 736–754 (FLMVRNLKVVNYFSSRNIK). The chain crosses the membrane as a helical span at residues 755–776 (MLHLCAFGYGLPVLVVIISASV). At 777–792 (QPRGYGMHNRCWLNTE) the chain is on the extracellular side. A helical membrane pass occupies residues 793 to 821 (TGFIWSFLGPVCMIITINSVLLAWTLWVL). The Cytoplasmic segment spans residues 822-839 (RQKLCSVSSEVSKLKDTR). The chain crosses the membrane as a helical span at residues 840-859 (LLTFKAIAQIFILGCSWVLG). The Extracellular segment spans residues 860–874 (IFQIGPLASIMAYLF). The chain crosses the membrane as a helical span at residues 875 to 897 (TIINSLQGAFIFLIHCLLNRQVR). Topologically, residues 898–931 (DEYKKLLTRKTDLSSHSQTSGILLSSMPSTSKMG) are cytoplasmic.

This sequence belongs to the G-protein coupled receptor 2 family. Adhesion G-protein coupled receptor (ADGR) subfamily. As to expression, in macrophages; but absent from those which are localized within T-cell areas of lymph nodes and spleen. Low level of expression on blood monocytes.

The protein localises to the cell membrane. Functionally, orphan receptor involved in cell adhesion and probably in cell-cell interactions specifically involving cells of the immune system. May play a role in regulatory T-cells (Treg) development. The protein is Adhesion G protein-coupled receptor E1 (Adgre1) of Mus musculus (Mouse).